The primary structure comprises 1761 residues: Probable serine/threonine-protein kinase DDB_G0282963 (1761 aa).

12 disordered regions span residues 18-47 (PQQQ…QQQQ), 60-269 (QQQQ…SNKL), 322-458 (SISN…SDFN), 545-717 (QNSS…KSSQ), 749-783 (LKNS…TISQ), 798-830 (AFYN…STSA), 842-956 (TTQI…KSVF), 972-997 (NSHH…EVPT), 1081-1151 (ITSA…CNVN), 1179-1305 (KNNC…PSKQ), 1318-1343 (ALDS…GTPT), and 1355-1459 (QHSR…ECWK). Composition is skewed to low complexity over residues 19–47 (QQQQ…QQQQ), 60–85 (QQQQ…SNEI), 92–105 (NITN…IISL), and 112–237 (ALNS…NNNN). Residues 238–256 (KQMTPPTFKNNLQVKHQPQ) show a composition bias toward polar residues. Composition is skewed to low complexity over residues 257–269 (SSSG…SNKL), 322–341 (SISN…TNTT), 348–451 (GSIG…NNGV), and 546–572 (NSSL…NNNI). A compositionally biased stretch (polar residues) spans 573–582 (MAGSTSSVIY). Residues 591 to 627 (NENNNNNINNDNTVCNINNNNNSNNNKSNNSNNSNNS) are compositionally biased toward low complexity. Residues 633-643 (SSDEEPETDSD) show a composition bias toward acidic residues. Low complexity-rich tracts occupy residues 674-697 (NNTN…NNNT), 759-778 (PILS…NNSN), 805-824 (NNNN…NNNN), 847-885 (TSDI…YNNY), 902-956 (TKMS…KSVF), 979-990 (SGNNSSNSNNNN), 1081-1149 (ITSA…CTCN), and 1180-1262 (NNCT…SNNN). A compositionally biased stretch (basic residues) spans 1263–1273 (NHHHHHHHHHN). 4 stretches are compositionally biased toward low complexity: residues 1288 to 1303 (SSSS…SSPS), 1320 to 1338 (DSTN…TSSN), 1359 to 1386 (NNSS…NNNN), and 1393 to 1454 (SNST…MNSN). Residues 1476–1744 (LFLIKKIGAG…AITSLYDDYI (269 aa)) form the Protein kinase domain. ATP contacts are provided by residues 1482 to 1490 (IGAGSFSKV) and Lys-1503. The active-site Proton acceptor is Asp-1597.

The protein belongs to the protein kinase superfamily. TKL Ser/Thr protein kinase family.

It carries out the reaction L-seryl-[protein] + ATP = O-phospho-L-seryl-[protein] + ADP + H(+). The enzyme catalyses L-threonyl-[protein] + ATP = O-phospho-L-threonyl-[protein] + ADP + H(+). This Dictyostelium discoideum (Social amoeba) protein is Probable serine/threonine-protein kinase DDB_G0282963.